The following is a 127-amino-acid chain: Glycine cleavage system H protein (127 aa).

The Lipoyl-binding domain maps to 24–105 (TALVGITDFA…YGSGWMVKMK (82 aa)). N6-lipoyllysine is present on Lys-65.

Belongs to the GcvH family. As to quaternary structure, the glycine cleavage system is composed of four proteins: P, T, L and H. It depends on (R)-lipoate as a cofactor.

In terms of biological role, the glycine cleavage system catalyzes the degradation of glycine. The H protein shuttles the methylamine group of glycine from the P protein to the T protein. The protein is Glycine cleavage system H protein of Chlorobium luteolum (strain DSM 273 / BCRC 81028 / 2530) (Pelodictyon luteolum).